We begin with the raw amino-acid sequence, 312 residues long: Acetyl-coenzyme A carboxylase carboxyl transferase subunit alpha (312 aa).

Positions 36 to 286 constitute a CoA carboxyltransferase C-terminal domain; it reads NLEKEISKTY…ADYVKKSLNE (251 aa).

This sequence belongs to the AccA family. In terms of assembly, acetyl-CoA carboxylase is a heterohexamer composed of biotin carboxyl carrier protein (AccB), biotin carboxylase (AccC) and two subunits each of ACCase subunit alpha (AccA) and ACCase subunit beta (AccD).

The protein resides in the cytoplasm. It catalyses the reaction N(6)-carboxybiotinyl-L-lysyl-[protein] + acetyl-CoA = N(6)-biotinyl-L-lysyl-[protein] + malonyl-CoA. The protein operates within lipid metabolism; malonyl-CoA biosynthesis; malonyl-CoA from acetyl-CoA: step 1/1. Its function is as follows. Component of the acetyl coenzyme A carboxylase (ACC) complex. First, biotin carboxylase catalyzes the carboxylation of biotin on its carrier protein (BCCP) and then the CO(2) group is transferred by the carboxyltransferase to acetyl-CoA to form malonyl-CoA. This Campylobacter jejuni (strain RM1221) protein is Acetyl-coenzyme A carboxylase carboxyl transferase subunit alpha.